Here is a 149-residue protein sequence, read N- to C-terminus: Nucleoside diphosphate kinase (149 aa).

Residues K9, F57, R85, T91, R102, and N112 each contribute to the ATP site. H115 serves as the catalytic Pros-phosphohistidine intermediate.

This sequence belongs to the NDK family. As to quaternary structure, homotetramer. Mg(2+) serves as cofactor.

The protein resides in the cytoplasm. It carries out the reaction a 2'-deoxyribonucleoside 5'-diphosphate + ATP = a 2'-deoxyribonucleoside 5'-triphosphate + ADP. It catalyses the reaction a ribonucleoside 5'-diphosphate + ATP = a ribonucleoside 5'-triphosphate + ADP. Its function is as follows. Major role in the synthesis of nucleoside triphosphates other than ATP. The ATP gamma phosphate is transferred to the NDP beta phosphate via a ping-pong mechanism, using a phosphorylated active-site intermediate. The polypeptide is Nucleoside diphosphate kinase (Microcystis aeruginosa (strain NIES-843 / IAM M-2473)).